The following is a 94-amino-acid chain: DNA-binding protein HU (94 aa).

It belongs to the bacterial histone-like protein family. In terms of assembly, homodimer.

Histone-like DNA-binding protein which is capable of wrapping DNA to stabilize it, and thus to prevent its denaturation under extreme environmental conditions. It is essential for heterocyst differentiation. This is DNA-binding protein HU (hup) from Nostoc sp. (strain PCC 7120 / SAG 25.82 / UTEX 2576).